The chain runs to 101 residues: Small ribosomal subunit protein uS14 (101 aa).

Belongs to the universal ribosomal protein uS14 family. Part of the 30S ribosomal subunit. Contacts proteins S3 and S10.

Its function is as follows. Binds 16S rRNA, required for the assembly of 30S particles and may also be responsible for determining the conformation of the 16S rRNA at the A site. The protein is Small ribosomal subunit protein uS14 of Bartonella bacilliformis (strain ATCC 35685 / KC583 / Herrer 020/F12,63).